Consider the following 1938-residue polypeptide: Autophagy-related protein 2 homolog A (1938 aa).

In terms of domain architecture, Chorein N-terminal spans 14–111 (ERVCRYLLHH…QLTLQPRRGP (98 aa)). Phosphoserine occurs at positions 765, 878, 892, 894, 1266, 1301, and 1309. Residues 1242–1272 (DLHPPPRPPSPTEIAGQKLSESPASLPSCPP) form a disordered region. A disordered region spans residues 1315-1359 (LFPGERSGAPPPSPPVGGPAGSLGSCSEEKEDEREEEGDGDTLDS). Residues 1343-1359 (EKEDEREEEGDGDTLDS) show a composition bias toward acidic residues. The WIPI-interacting stretch occupies residues 1358 to 1404 (DSDEFCILDAPGLGIPPRDGEPVVTQLHPGPIVVRDGYFSRPIGSTD). S1402 carries the post-translational modification Phosphoserine. Disordered regions lie at residues 1438-1476 (PHPGHRARTGLSGPRSSPSRCSGPNRPQNSWRTQGGSGR) and 1614-1657 (GETS…PSPP). The span at 1446–1464 (TGLSGPRSSPSRCSGPNRP) shows a compositional bias: low complexity.

The protein belongs to the ATG2 family. In terms of assembly, interacts with ATG9A (via C-terminus). Interacts (via WIPI-interacting region) with WDR45B/WIPI3. Interacts (via WIPI-interacting region) with WDR45/WIPI4. Interacts with TMEM41B. Interacts with VMP1.

It localises to the preautophagosomal structure membrane. The protein localises to the lipid droplet. It is found in the endoplasmic reticulum membrane. It catalyses the reaction a 1,2-diacyl-sn-glycero-3-phospho-L-serine(in) = a 1,2-diacyl-sn-glycero-3-phospho-L-serine(out). The catalysed reaction is a 1,2-diacyl-sn-glycero-3-phosphoethanolamine(in) = a 1,2-diacyl-sn-glycero-3-phosphoethanolamine(out). Its function is as follows. Lipid transfer protein involved in autophagosome assembly. Tethers the edge of the isolation membrane (IM) to the endoplasmic reticulum (ER) and mediates direct lipid transfer from ER to IM for IM expansion. Binds to the ER exit site (ERES), which is the membrane source for autophagosome formation, and extracts phospholipids from the membrane source and transfers them to ATG9 (ATG9A or ATG9B) to the IM for membrane expansion. Lipid transfer activity is enhanced by WIPI1 and WDR45/WIPI4, which promote ATG2A-association with phosphatidylinositol 3-monophosphate (PI3P)-containing membranes. Also regulates lipid droplets morphology and distribution within the cell. This chain is Autophagy-related protein 2 homolog A, found in Homo sapiens (Human).